A 143-amino-acid chain; its full sequence is Photosystem I reaction center subunit IV B, chloroplastic (143 aa).

Residues 1–51 (MASSSMASAASGFMVATPNIATSNTAPRTSMLFFSSSKNNTTTNFPRLVVR) constitute a chloroplast transit peptide. Residues 56–75 (AAPPAATATAEGEAPPAKAA) show a composition bias toward low complexity. The segment at 56–86 (AAPPAATATAEGEAPPAKAAKPPPIGPKRGT) is disordered.

Belongs to the PsaE family. 2 isoforms exists (ratio 1:1). With or without the N-terminal alanine.

It localises to the plastid. It is found in the chloroplast thylakoid membrane. Functionally, stabilizes the interaction between PsaC and the PSI core, assists the docking of the ferredoxin to PSI and interacts with ferredoxin-NADP oxidoreductase. The chain is Photosystem I reaction center subunit IV B, chloroplastic (PSAEB) from Nicotiana sylvestris (Wood tobacco).